A 263-amino-acid polypeptide reads, in one-letter code: Homeobox protein CDX-1 (263 aa).

The tract at residues 47–108 (PGINSDPHHG…VQPPGSGLLP (62 aa)) is disordered. Residues 82–97 (SSANPTQIAFSPSDYN) show a composition bias toward polar residues. Positions 150–209 (KDKYRVVYTDHQRLELEKEFHYSRYITIRRKAELAAALGLTERQVKIWFQNRRAKERKVN) form a DNA-binding region, homeobox. The segment at 153 to 174 (YRVVYTDHQRLELEKEFHYSRY) is interaction with DNA. The tract at residues 192–203 (RQVKIWFQNRRA) is interaction with 5-mCpG DNA. Positions 204-213 (KERKVNKKKM) are enriched in basic residues. The segment at 204 to 263 (KERKVNKKKMQQQSQQASTTTPTPPSVGTTAGMGGLCSSSSSNSNLVSPSSMPIKEEYLS) is disordered. Composition is skewed to low complexity over residues 214-233 (QQQS…VGTT) and 241-254 (SSSS…SPSS).

This sequence belongs to the Caudal homeobox family.

The protein localises to the nucleus. Plays a role in transcriptional regulation. Involved in activated KRAS-mediated transcriptional activation of PRKD1. Binds to the PRKD1 promoter. Could play a role in the terminal differentiation of the intestine. Binds preferentially to methylated DNA. The sequence is that of Homeobox protein CDX-1 (cdx1) from Xenopus laevis (African clawed frog).